A 158-amino-acid chain; its full sequence is NADH-quinone oxidoreductase subunit B 2 (158 aa).

Residues Cys-37, Cys-38, Cys-102, and Cys-132 each contribute to the [4Fe-4S] cluster site.

It belongs to the complex I 20 kDa subunit family. In terms of assembly, NDH-1 is composed of 14 different subunits. Subunits NuoB, C, D, E, F, and G constitute the peripheral sector of the complex. [4Fe-4S] cluster is required as a cofactor.

The protein localises to the cell inner membrane. The catalysed reaction is a quinone + NADH + 5 H(+)(in) = a quinol + NAD(+) + 4 H(+)(out). NDH-1 shuttles electrons from NADH, via FMN and iron-sulfur (Fe-S) centers, to quinones in the respiratory chain. Couples the redox reaction to proton translocation (for every two electrons transferred, four hydrogen ions are translocated across the cytoplasmic membrane), and thus conserves the redox energy in a proton gradient. This Nitrosospira multiformis (strain ATCC 25196 / NCIMB 11849 / C 71) protein is NADH-quinone oxidoreductase subunit B 2.